We begin with the raw amino-acid sequence, 262 residues long: 3-methyl-2-oxobutanoate hydroxymethyltransferase (262 aa).

Mg(2+)-binding residues include D43 and D82. 3-methyl-2-oxobutanoate is bound by residues 43 to 44 (DS), D82, and K111. Residue E113 coordinates Mg(2+). E180 (proton acceptor) is an active-site residue.

The protein belongs to the PanB family. In terms of assembly, homodecamer; pentamer of dimers. It depends on Mg(2+) as a cofactor.

Its subcellular location is the cytoplasm. The enzyme catalyses 3-methyl-2-oxobutanoate + (6R)-5,10-methylene-5,6,7,8-tetrahydrofolate + H2O = 2-dehydropantoate + (6S)-5,6,7,8-tetrahydrofolate. The protein operates within cofactor biosynthesis; (R)-pantothenate biosynthesis; (R)-pantoate from 3-methyl-2-oxobutanoate: step 1/2. Catalyzes the reversible reaction in which hydroxymethyl group from 5,10-methylenetetrahydrofolate is transferred onto alpha-ketoisovalerate to form ketopantoate. This chain is 3-methyl-2-oxobutanoate hydroxymethyltransferase, found in Wolinella succinogenes (strain ATCC 29543 / DSM 1740 / CCUG 13145 / JCM 31913 / LMG 7466 / NCTC 11488 / FDC 602W) (Vibrio succinogenes).